A 349-amino-acid polypeptide reads, in one-letter code: uncharacterized protein (349 aa).

Residues 17-37 traverse the membrane as a helical segment; the sequence is VIAIVSTGLVFAMTLVLTGLV. The tract at residues 111 to 131 is disordered; it reads FGAPEHGPGMPRVSDGRAPST. The next 3 helical transmembrane spans lie at 230 to 250, 284 to 304, and 308 to 328; these read AITVVAVLLWIVAALIVGSVV, VVALLAAVVGGILSLLLAPLF, and VVVPLSAFVALPAIATVIGLL.

The protein belongs to the ABC-4 integral membrane protein family.

The protein resides in the cell membrane. This is an uncharacterized protein from Mycobacterium bovis (strain ATCC BAA-935 / AF2122/97).